The chain runs to 518 residues: 2,3-bisphosphoglycerate-independent phosphoglycerate mutase (518 aa).

The Mn(2+) site is built by Asp14 and Ser64. Ser64 functions as the Phosphoserine intermediate in the catalytic mechanism. Residues His125, 155 to 156 (RD), Arg187, Arg193, 264 to 267 (RPDR), and Lys337 each bind substrate. 5 residues coordinate Mn(2+): Asp404, His408, Asp445, His446, and His467.

It belongs to the BPG-independent phosphoglycerate mutase family. Mn(2+) is required as a cofactor.

The enzyme catalyses (2R)-2-phosphoglycerate = (2R)-3-phosphoglycerate. The protein operates within carbohydrate degradation; glycolysis; pyruvate from D-glyceraldehyde 3-phosphate: step 3/5. Functionally, catalyzes the interconversion of 2-phosphoglycerate and 3-phosphoglycerate. The chain is 2,3-bisphosphoglycerate-independent phosphoglycerate mutase from Methanococcoides burtonii (strain DSM 6242 / NBRC 107633 / OCM 468 / ACE-M).